The following is a 493-amino-acid chain: 3-octaprenyl-4-hydroxybenzoate carboxy-lyase (493 aa).

Asparagine 175 lines the Mn(2+) pocket. Prenylated FMN is bound by residues 178-180, 192-194, and 197-198; these read IYR, RWL, and RG. Residue glutamate 241 coordinates Mn(2+). The active-site Proton donor is the aspartate 290.

It belongs to the UbiD family. Homohexamer. Prenylated FMN is required as a cofactor. Requires Mn(2+) as cofactor.

The protein localises to the cell membrane. It catalyses the reaction a 4-hydroxy-3-(all-trans-polyprenyl)benzoate + H(+) = a 2-(all-trans-polyprenyl)phenol + CO2. It functions in the pathway cofactor biosynthesis; ubiquinone biosynthesis. Functionally, catalyzes the decarboxylation of 3-octaprenyl-4-hydroxy benzoate to 2-octaprenylphenol, an intermediate step in ubiquinone biosynthesis. In Photorhabdus laumondii subsp. laumondii (strain DSM 15139 / CIP 105565 / TT01) (Photorhabdus luminescens subsp. laumondii), this protein is 3-octaprenyl-4-hydroxybenzoate carboxy-lyase.